We begin with the raw amino-acid sequence, 232 residues long: Ribose-5-phosphate isomerase A (232 aa).

Substrate is bound by residues 31–34 (TGST), 87–90 (DGAD), and 100–103 (KGGG). The Proton acceptor role is filled by Glu-109. Lys-127 serves as a coordination point for substrate.

This sequence belongs to the ribose 5-phosphate isomerase family. In terms of assembly, homodimer.

It carries out the reaction aldehydo-D-ribose 5-phosphate = D-ribulose 5-phosphate. It participates in carbohydrate degradation; pentose phosphate pathway; D-ribose 5-phosphate from D-ribulose 5-phosphate (non-oxidative stage): step 1/1. In terms of biological role, catalyzes the reversible conversion of ribose-5-phosphate to ribulose 5-phosphate. This is Ribose-5-phosphate isomerase A from Bifidobacterium longum (strain NCC 2705).